A 213-amino-acid chain; its full sequence is Pyrrolidone-carboxylate peptidase (213 aa).

Active-site residues include Glu78, Cys141, and His165.

It belongs to the peptidase C15 family. In terms of assembly, homotetramer.

It is found in the cytoplasm. It catalyses the reaction Release of an N-terminal pyroglutamyl group from a polypeptide, the second amino acid generally not being Pro.. Removes 5-oxoproline from various penultimate amino acid residues except L-proline. The sequence is that of Pyrrolidone-carboxylate peptidase from Clostridium perfringens (strain 13 / Type A).